The chain runs to 316 residues: uncharacterized protein (316 aa).

One can recognise an S4 RNA-binding domain in the interval 26–98; sequence ERIDRFLAGA…IPLDVVYEDA (73 aa). Residue Asp-148 is part of the active site.

It belongs to the pseudouridine synthase RluA family.

It carries out the reaction a uridine in RNA = a pseudouridine in RNA. This is an uncharacterized protein from Chloroflexus aurantiacus (strain ATCC 29366 / DSM 635 / J-10-fl).